The primary structure comprises 232 residues: Phosphate-specific transport system accessory protein PhoU homolog 1 (232 aa).

Belongs to the PhoU family. As to quaternary structure, homodimer.

The protein resides in the cytoplasm. Its function is as follows. Plays a role in the regulation of phosphate uptake. The chain is Phosphate-specific transport system accessory protein PhoU homolog 1 (phoU1) from Thermotoga maritima (strain ATCC 43589 / DSM 3109 / JCM 10099 / NBRC 100826 / MSB8).